The primary structure comprises 134 residues: uncharacterized protein (134 aa).

The region spanning 10–70 (KETRQRIIDA…AVLASRQHPL (61 aa)) is the HTH tetR-type domain. A DNA-binding region (H-T-H motif) is located at residues 33–52 (TLDQIARKAGVTRGAVYWHF).

Its function is as follows. Unknown, does not seem to be involved in regulation of the ttgGHI or ttgVW operons. This is an uncharacterized protein from Pseudomonas putida (strain DOT-T1E).